The chain runs to 72 residues: Translation initiation factor IF-1 (72 aa).

Residues 1 to 72 (MAKDDVIQMQ…SRARIVFRTK (72 aa)) form the S1-like domain.

This sequence belongs to the IF-1 family. Component of the 30S ribosomal translation pre-initiation complex which assembles on the 30S ribosome in the order IF-2 and IF-3, IF-1 and N-formylmethionyl-tRNA(fMet); mRNA recruitment can occur at any time during PIC assembly.

The protein resides in the cytoplasm. Its function is as follows. One of the essential components for the initiation of protein synthesis. Stabilizes the binding of IF-2 and IF-3 on the 30S subunit to which N-formylmethionyl-tRNA(fMet) subsequently binds. Helps modulate mRNA selection, yielding the 30S pre-initiation complex (PIC). Upon addition of the 50S ribosomal subunit IF-1, IF-2 and IF-3 are released leaving the mature 70S translation initiation complex. This is Translation initiation factor IF-1 from Herminiimonas arsenicoxydans.